A 377-amino-acid chain; its full sequence is Succinyl-diaminopimelate desuccinylase (377 aa).

His-68 serves as a coordination point for Zn(2+). Asp-70 is a catalytic residue. Asp-101 is a binding site for Zn(2+). Glu-135 acts as the Proton acceptor in catalysis. 3 residues coordinate Zn(2+): Glu-136, Glu-164, and His-350.

This sequence belongs to the peptidase M20A family. DapE subfamily. In terms of assembly, homodimer. Requires Zn(2+) as cofactor. Co(2+) serves as cofactor.

The catalysed reaction is N-succinyl-(2S,6S)-2,6-diaminopimelate + H2O = (2S,6S)-2,6-diaminopimelate + succinate. The protein operates within amino-acid biosynthesis; L-lysine biosynthesis via DAP pathway; LL-2,6-diaminopimelate from (S)-tetrahydrodipicolinate (succinylase route): step 3/3. In terms of biological role, catalyzes the hydrolysis of N-succinyl-L,L-diaminopimelic acid (SDAP), forming succinate and LL-2,6-diaminopimelate (DAP), an intermediate involved in the bacterial biosynthesis of lysine and meso-diaminopimelic acid, an essential component of bacterial cell walls. In Vibrio vulnificus (strain CMCP6), this protein is Succinyl-diaminopimelate desuccinylase.